Consider the following 866-residue polypeptide: Thiamine diphosphate dependent-3-acetyloctanal synthase PigD (866 aa).

Residues 826 to 866 (KGWQRDPSDREALQERKDWAARQPESTSTSFDQGQNKEAIS) form a disordered region. The segment covering 828 to 845 (WQRDPSDREALQERKDWA) has biased composition (basic and acidic residues). Residues 849–866 (PESTSTSFDQGQNKEAIS) are compositionally biased toward polar residues.

Belongs to the TPP enzyme family. Thiamine diphosphate serves as cofactor.

It carries out the reaction (2E)-octenal + pyruvate + H(+) = (S)-3-acetyloctanal + CO2. It functions in the pathway antibiotic biosynthesis; prodigiosin biosynthesis. In terms of biological role, involved in the biosynthesis of 2-methyl-3-n-amyl-pyrrole (MAP), one of the terminal products involved in the biosynthesis of the red antibiotic prodigiosin (Pig). Catalyzes the decarboxylation of pyruvate, followed by the modification of the resulting two-carbon fragment acetaldehyde at the C3 position of the 2-octenal (1,2-addition of acetaldehyde) giving 3-acetyloctanal. The sequence is that of Thiamine diphosphate dependent-3-acetyloctanal synthase PigD from Serratia sp. (strain ATCC 39006) (Prodigiosinella confusarubida).